The chain runs to 91 residues: DNA-binding protein HU (91 aa).

The protein belongs to the bacterial histone-like protein family.

Functionally, histone-like DNA-binding protein which is capable of wrapping DNA to stabilize it, and thus to prevent its denaturation under extreme environmental conditions. The chain is DNA-binding protein HU (hup) from Clostridium pasteurianum.